Consider the following 448-residue polypeptide: Nicotinate phosphoribosyltransferase pncB1 (448 aa).

Positions 1–21 (MGPPPAARRREGEPDNQDPAG) are disordered. His-212 carries the phosphohistidine modification. The disordered stretch occupies residues 353–372 (RSSYKESPGGRKEALRRSRA).

Belongs to the NAPRTase family. Transiently phosphorylated on a His residue during the reaction cycle. Phosphorylation strongly increases the affinity for substrates and increases the rate of nicotinate D-ribonucleotide production. Dephosphorylation regenerates the low-affinity form of the enzyme, leading to product release.

It catalyses the reaction nicotinate + 5-phospho-alpha-D-ribose 1-diphosphate + ATP + H2O = nicotinate beta-D-ribonucleotide + ADP + phosphate + diphosphate. Its pathway is cofactor biosynthesis; NAD(+) biosynthesis; nicotinate D-ribonucleotide from nicotinate: step 1/1. Functionally, involved in the Preiss-Handler pathway, which is a recycling route that permits the salvage of free nicotinamide (NM) and nicotinic acid (Na) involved in the NAD biosynthesis. Catalyzes the synthesis of beta-nicotinate D-ribonucleotide from nicotinate and 5-phospho-D-ribose 1-phosphate at the expense of ATP. It is not able to use nicotinamide. PncB1 contributes to basal NAD level. This is Nicotinate phosphoribosyltransferase pncB1 (pncB1) from Mycobacterium tuberculosis (strain ATCC 25618 / H37Rv).